The chain runs to 167 residues: Phosphopantetheine adenylyltransferase (167 aa).

Thr-9 is a binding site for substrate. ATP is bound by residues 9 to 10 (TF) and His-17. Residues Lys-41, Leu-73, and Arg-87 each contribute to the substrate site. ATP is bound by residues 88–90 (GLR), Glu-98, and 123–129 (YQFISGT).

The protein belongs to the bacterial CoaD family. As to quaternary structure, homohexamer. Mg(2+) is required as a cofactor.

The protein resides in the cytoplasm. The enzyme catalyses (R)-4'-phosphopantetheine + ATP + H(+) = 3'-dephospho-CoA + diphosphate. It participates in cofactor biosynthesis; coenzyme A biosynthesis; CoA from (R)-pantothenate: step 4/5. Reversibly transfers an adenylyl group from ATP to 4'-phosphopantetheine, yielding dephospho-CoA (dPCoA) and pyrophosphate. This is Phosphopantetheine adenylyltransferase from Ralstonia pickettii (strain 12J).